Here is a 1477-residue protein sequence, read N- to C-terminus: Neurexin-1 (1477 aa).

A signal peptide spans 1 to 30; sequence MGTALLQRGGCFLLCLSLLLLGCWAELGSG. One can recognise a Laminin G-like 1 domain in the interval 31-217; the sequence is LEFPGAEGQW…PPNSGGGSPC (187 aa). The Extracellular portion of the chain corresponds to 31-1401; that stretch reads LEFPGAEGQW…EVIRESSSTT (1371 aa). 2 N-linked (GlcNAc...) asparagine glycosylation sites follow: N125 and N190. The interval 198–221 is disordered; the sequence is DSGEVKLDDEPPNSGGGSPCEAGE. Positions 213–256 constitute an EGF-like 1 domain; sequence GGSPCEAGEEGEGGVCLNGGVCSVVDDQAVCDCSRTGFRGKDCS. Disulfide bonds link C228–C243 and C245–C255. Laminin G-like domains are found at residues 283-473 and 480-672; these read IATF…AFKC and DPIT…KPSC. The Ca(2+) site is built by D329, L346, and M407. 5 disulfide bridges follow: C437–C473, C643–C672, C680–C691, C685–C700, and C702–C712. One can recognise an EGF-like 2 domain in the interval 676-713; it reads TAKPCLSNPCKNNGMCRDGWNRYVCDCSGTGYLGRSCE. Laminin G-like domains follow at residues 718 to 891 and 905 to 1080; these read VLSY…IDYC and DPVT…ERGC. 2 residues coordinate Ca(2+): D765 and L782. N790 is a glycosylation site (N-linked (GlcNAc...) asparagine). R841 is a Ca(2+) binding site. 5 disulfide bridges follow: C883-C891, C1052-C1080, C1087-C1098, C1092-C1107, and C1109-C1119. The region spanning 1083–1120 is the EGF-like 3 domain; sequence PSTTCQEDSCSNQGVCLQQWDGFSCDCSMTSFSGPLCN. The Laminin G-like 6 domain maps to 1126 to 1294; sequence YIFSKGGGQI…DANIAIVGNV (169 aa). Residues D1176 and V1193 each contribute to the Ca(2+) site. N1223 carries an N-linked (GlcNAc...) asparagine glycan. The Ca(2+) site is built by I1245 and N1247. Positions 1325–1390 are disordered; that stretch reads TTTLATSTAR…AGGREPYPGS (66 aa). O-linked (Xyl...) (heparan sulfate) serine glycosylation occurs at S1355. The chain crosses the membrane as a helical span at residues 1402-1422; sequence GMVVGIVAAAALCILILLYAM. The Cytoplasmic segment spans residues 1423 to 1477; the sequence is YKYRNRDEGSYHVDESRNYISNSAQSNGAVVKEKQPSSAKSSNKNKKNKDKEYYV. The segment at 1444-1470 is interaction with CASK; it reads NSAQSNGAVVKEKQPSSAKSSNKNKKN. A disordered region spans residues 1444–1477; the sequence is NSAQSNGAVVKEKQPSSAKSSNKNKKNKDKEYYV.

Belongs to the neurexin family. Interacts (via laminin G-like domain 2 and/or laminin G-like domain 6) with NLGN1 forming a heterotetramer, where one NLGN1 dimer interacts with one NRXN1 dimer. Also interacts (via laminin G-like domain 2 and/or laminin G-like domain 6) with NLGN2, NLGN3 and NLGN4L; interactions with NLGN1, NLGN2, NLGN3 and NLGN4L are calcium-dependent. Interacts (via cytoplasmic C-terminal region) with CASK (via the PDZ, SH3 and guanylate kinase-like domains). Interacts (via cytoplasmic C-terminus) with CASKIN1 and APBA1. Interacts (via laminin G-like domain 2) with NXPH1 and NXPH3. Alpha-type isoforms (neurexin-1-alpha) interact (via laminin G-like domain 2 and/or laminin G-like domain 6) with DAG1 (via alpha-dystroglycan chain). Interacts with LRRTM1, LRRTM2, LRRTM3 and LRRTM4. Interacts with SYT13 and SYTL1. Interacts with CBLN1, CBLN2 and, less avidly, with CBLN4. Interacts with CLSTN3. Post-translationally, O-glycosylated; contains heparan sulfate. Heparan sulfate attachment is required for synapse development by mediating interactions with neuroligins and LRRTM2. In terms of tissue distribution, brain.

Its subcellular location is the presynaptic cell membrane. Cell surface protein involved in cell-cell-interactions, exocytosis of secretory granules and regulation of signal transmission. Function is isoform-specific. Alpha-type isoforms have a long N-terminus with six laminin G-like domains and play an important role in synaptic signal transmission. Alpha-type isoforms play a role in the regulation of calcium channel activity and Ca(2+)-triggered neurotransmitter release at synapses and at neuromuscular junctions. They play an important role in Ca(2+)-triggered exocytosis of secretory granules in pituitary gland. They may affect their functions at synapses and in endocrine cells via their interactions with proteins from the exocytotic machinery. Likewise, alpha-type isoforms play a role in regulating the activity of postsynaptic NMDA receptors, a subtype of glutamate-gated ion channels. Both alpha-type and beta-type isoforms may play a role in the formation or maintenance of synaptic junctions via their interactions (via the extracellular domains) with neuroligin family members, CBLN1 or CBLN2. In vitro, triggers the de novo formation of presynaptic structures. May be involved in specification of excitatory synapses. Alpha-type isoforms were first identified as receptors for alpha-latrotoxin from spider venom. The polypeptide is Neurexin-1 (NRXN1) (Homo sapiens (Human)).